The primary structure comprises 1080 residues: AP-4 complex subunit epsilon (1080 aa).

HEAT repeat units follow at residues 161–198 (DTIP…LVGD), 201–238 (LDDD…KHST), 369–405 (QLIE…KVSP), 406–443 (KLVL…QTNV), and 445–479 (PVCS…KYSP). 4 disordered regions span residues 711–782 (TPLV…FPQQ), 801–920 (NNNS…NIDP), 933–973 (FSEN…INNN), and 996–1027 (TNNS…NNNL). Composition is skewed to low complexity over residues 762–782 (QQQQ…FPQQ), 801–847 (NNNS…PNNQ), 878–911 (NKQT…IQKH), 936–952 (NNNR…NQNN), and 962–972 (KKSNNENNINN).

The protein belongs to the adaptor complexes large subunit family. May be part of the adaptor protein complex 4 (AP-4), a heterotetramer composed of two large adaptins (epsilon-type subunitand beta-type subunit), a medium adaptin (mu-type subunit) and a small adaptin (sigma-type).

It localises to the golgi apparatus. The protein resides in the trans-Golgi network membrane. Probable component of an adaptor protein complex. Adaptor protein complexes are vesicle coat components involved both in vesicle formation and cargo selection. They control the vesicular transport of proteins in different trafficking pathways. In Dictyostelium discoideum (Social amoeba), this protein is AP-4 complex subunit epsilon.